The sequence spans 52 residues: Large ribosomal subunit protein bL32c (52 aa).

This sequence belongs to the bacterial ribosomal protein bL32 family.

It localises to the plastid. Its subcellular location is the chloroplast. This is Large ribosomal subunit protein bL32c from Eucalyptus globulus subsp. globulus (Tasmanian blue gum).